The sequence spans 129 residues: N16.5 matrix protein (129 aa).

Residues 1-23 form the signal peptide; it reads MTCTLRWTITALVLLGICHLARP. 5 consecutive repeat copies span residues 91–92, 93–94, 95–96, 97–98, and 99–100. Residues 91–100 are 5 X 2 AA tandem repeats of N-G; the sequence is NGNGNGNGNG.

It belongs to the N16 matrix protein family. Heterooligomer; disulfide-linked. Pif97, Pif80, N16 and other proteins form a complex. As to expression, component of conchiolin, the organic matrix of nacre. Specifically expressed in mantle epithelium.

It is found in the secreted. The protein localises to the extracellular space. The protein resides in the extracellular matrix. Functionally, may be specifically involved in the formation of the nacreous layer. The chain is N16.5 matrix protein from Pinctada fucata (Akoya pearl oyster).